The following is a 556-amino-acid chain: Dihydroxy-acid dehydratase (556 aa).

Residue C47 coordinates [2Fe-2S] cluster. A Mg(2+)-binding site is contributed by D79. Residue C120 participates in [2Fe-2S] cluster binding. 2 residues coordinate Mg(2+): D121 and K122. N6-carboxylysine is present on K122. Position 192 (C192) interacts with [2Fe-2S] cluster. Residue E444 coordinates Mg(2+). The active-site Proton acceptor is the S470.

The protein belongs to the IlvD/Edd family. In terms of assembly, homodimer. The cofactor is [2Fe-2S] cluster. Mg(2+) is required as a cofactor.

The catalysed reaction is (2R)-2,3-dihydroxy-3-methylbutanoate = 3-methyl-2-oxobutanoate + H2O. It catalyses the reaction (2R,3R)-2,3-dihydroxy-3-methylpentanoate = (S)-3-methyl-2-oxopentanoate + H2O. Its pathway is amino-acid biosynthesis; L-isoleucine biosynthesis; L-isoleucine from 2-oxobutanoate: step 3/4. It participates in amino-acid biosynthesis; L-valine biosynthesis; L-valine from pyruvate: step 3/4. Functionally, functions in the biosynthesis of branched-chain amino acids. Catalyzes the dehydration of (2R,3R)-2,3-dihydroxy-3-methylpentanoate (2,3-dihydroxy-3-methylvalerate) into 2-oxo-3-methylpentanoate (2-oxo-3-methylvalerate) and of (2R)-2,3-dihydroxy-3-methylbutanoate (2,3-dihydroxyisovalerate) into 2-oxo-3-methylbutanoate (2-oxoisovalerate), the penultimate precursor to L-isoleucine and L-valine, respectively. The protein is Dihydroxy-acid dehydratase of Prochlorococcus marinus (strain NATL2A).